The following is a 74-amino-acid chain: Conotoxin TsMLCL-04 (74 aa).

The N-terminal stretch at 1 to 19 (MLCLPVFIILLLLASPAAP) is a signal peptide. Residues 20–60 (NPLETRIQRDLIRAALEDADMKTNERFLEGVISTIKDFAGK) constitute a propeptide that is removed on maturation.

This sequence belongs to the conotoxin T superfamily. Contains 2 disulfide bonds that can be either 'C1-C3, C2-C4' or 'C1-C4, C2-C3', since these disulfide connectivities have been observed for conotoxins with cysteine framework V (for examples, see AC P0DQQ7 and AC P81755). Expressed by the venom duct.

Its subcellular location is the secreted. The protein is Conotoxin TsMLCL-04 of Conus tessulatus (Tessellate cone).